The sequence spans 132 residues: MARILGVDIPNDKRVVISLTYIFGIGKSTSQKILKLANIDENIRVNDLADEQIAEIRRVALNFVKANGEKLQLEGDLRRTVAMDIKRLMEIGSYRGIRHRRGLPVRGQRTKTNARTRKGPRKTVANKKIETR.

Residues 101–125 are compositionally biased toward basic residues; sequence RGLPVRGQRTKTNARTRKGPRKTVA. The interval 101–132 is disordered; the sequence is RGLPVRGQRTKTNARTRKGPRKTVANKKIETR.

This sequence belongs to the universal ribosomal protein uS13 family. Part of the 30S ribosomal subunit. Forms a loose heterodimer with protein S19. Forms two bridges to the 50S subunit in the 70S ribosome.

Its function is as follows. Located at the top of the head of the 30S subunit, it contacts several helices of the 16S rRNA. In the 70S ribosome it contacts the 23S rRNA (bridge B1a) and protein L5 of the 50S subunit (bridge B1b), connecting the 2 subunits; these bridges are implicated in subunit movement. Contacts the tRNAs in the A and P-sites. The polypeptide is Small ribosomal subunit protein uS13 (Ureaplasma urealyticum serovar 10 (strain ATCC 33699 / Western)).